A 142-amino-acid polypeptide reads, in one-letter code: MRLIFIAKMLQYSFLPFSPFNLLNFDNSISVSWFITYSVIVSIWGFAVWIEGAYRNKINLQLPRCTKIKCSRYNTRIKSPKWFNCKNWMHFFLLYLFLTASNLIVQLAYFSKEMCSQGINVPGTKKPGNRVYLSVIILMGNG.

3 consecutive transmembrane segments (helical) span residues Leu3–Leu23, Ser30–Ile50, and Phe91–Ser111.

It is found in the membrane. This is an uncharacterized protein from Saccharomyces cerevisiae (strain ATCC 204508 / S288c) (Baker's yeast).